A 325-amino-acid polypeptide reads, in one-letter code: Lactonase drp35 (325 aa).

Residues Glu-46, Ser-108, Gly-110, Glu-128, Thr-131, Tyr-133, Asp-136, Asn-183, Asp-234, and Ser-235 each contribute to the Ca(2+) site. Asp-234 serves as the catalytic Proton donor.

The protein belongs to the SMP-30/CGR1 family. Requires Ca(2+) as cofactor.

It localises to the cytoplasm. Its function is as follows. Exhibits lactonase activity. Acts in cells with perturbed membrane integrity and is possibly related to the membrane homeostasis. The sequence is that of Lactonase drp35 (drp35) from Staphylococcus haemolyticus (strain JCSC1435).